Consider the following 395-residue polypeptide: L-methionine gamma-lyase (395 aa).

Residues 56-58 (YTR) and 86-87 (GM) each bind pyridoxal 5'-phosphate. Y111 contributes to the substrate binding site. 206–208 (SVT) contacts pyridoxal 5'-phosphate. K209 is subject to N6-(pyridoxal phosphate)lysine. R373 contacts substrate.

It belongs to the trans-sulfuration enzymes family. L-methionine gamma-lyase subfamily. Homotetramer. Pyridoxal 5'-phosphate serves as cofactor.

It carries out the reaction L-methionine + H2O = methanethiol + 2-oxobutanoate + NH4(+). It catalyses the reaction L-homocysteine + H2O = 2-oxobutanoate + hydrogen sulfide + NH4(+) + H(+). Catalyzes the alpha,gamma-elimination of L-methionine to produce methanethiol, 2-oxobutanoate and ammonia; methanethiol (methyl mercaptan) is considered to be one of the main causes of the oral malodor associated with periodontitis. Also displays homocysteine desulfhydrase activity, degrading homocysteine to produce hydrogen sulfide, 2-oxobutanoate and ammonia. L-cysteine and S-methyl-L-cysteine are poor substrates for the enzyme. Its function is as follows. Plays an important role in the resistance of F.nucleatum to the antibacterial agent 3-chloro-DL-alanine (3CA), thanks to its 3CA chloride-lyase (deaminating) activity. This is L-methionine gamma-lyase from Fusobacterium nucleatum subsp. polymorphum (Fusobacterium polymorphum).